Reading from the N-terminus, the 287-residue chain is Protease HtpX (287 aa).

The next 2 membrane-spanning stretches (helical) occupy residues 4 to 24 (ILLF…VLNI) and 36 to 56 (LSGL…ISLL). Residue histidine 143 participates in Zn(2+) binding. Glutamate 144 is an active-site residue. Zn(2+) is bound at residue histidine 147. Transmembrane regions (helical) follow at residues 158-178 (LMQG…ANIV) and 192-212 (MVYF…ASFI). Residue glutamate 221 coordinates Zn(2+).

This sequence belongs to the peptidase M48B family. Zn(2+) serves as cofactor.

The protein localises to the cell inner membrane. This is Protease HtpX from Vibrio cholerae serotype O1 (strain ATCC 39315 / El Tor Inaba N16961).